The sequence spans 495 residues: Probable cytosol aminopeptidase (495 aa).

Mn(2+)-binding residues include Lys-261 and Asp-266. Residue Lys-273 is part of the active site. 3 residues coordinate Mn(2+): Asp-284, Asp-343, and Glu-345. The active site involves Arg-347.

The protein belongs to the peptidase M17 family. Mn(2+) serves as cofactor.

It localises to the cytoplasm. The catalysed reaction is Release of an N-terminal amino acid, Xaa-|-Yaa-, in which Xaa is preferably Leu, but may be other amino acids including Pro although not Arg or Lys, and Yaa may be Pro. Amino acid amides and methyl esters are also readily hydrolyzed, but rates on arylamides are exceedingly low.. It catalyses the reaction Release of an N-terminal amino acid, preferentially leucine, but not glutamic or aspartic acids.. Functionally, presumably involved in the processing and regular turnover of intracellular proteins. Catalyzes the removal of unsubstituted N-terminal amino acids from various peptides. This chain is Probable cytosol aminopeptidase, found in Chelativorans sp. (strain BNC1).